Reading from the N-terminus, the 138-residue chain is Molluscan insulin-related peptide 5 (138 aa).

A signal peptide spans 1–31 (MAGVRLVFTKAFMVTVLLTLLLNIGVKPAEG). Glutamine 32 is subject to Pyrrolidone carboxylic acid. Intrachain disulfides connect cysteine 48/cysteine 124, cysteine 60/cysteine 137, and cysteine 123/cysteine 128. The propeptide at 72 to 84 (DAETGWLLPETMV) is C-beta peptide like. Residues 87 to 111 (NAQTDLDDPLRNIKLSSESALTYLT) constitute a propeptide, C-alpha peptide like. Glutamine 114 is modified (pyrrolidone carboxylic acid).

This sequence belongs to the insulin family. In terms of assembly, heterodimer of a B chain and an A chain linked by two disulfide bonds. Expressed in the cerebral light-green cells which are giant neuroendocrines cells involved in the control of growth.

It is found in the cytoplasmic vesicle. Its subcellular location is the secretory vesicle. This chain is Molluscan insulin-related peptide 5, found in Lymnaea stagnalis (Great pond snail).